We begin with the raw amino-acid sequence, 358 residues long: UDP-3-O-acylglucosamine N-acyltransferase (358 aa).

Catalysis depends on His-252, which acts as the Proton acceptor.

The protein belongs to the transferase hexapeptide repeat family. LpxD subfamily. Homotrimer.

It catalyses the reaction a UDP-3-O-[(3R)-3-hydroxyacyl]-alpha-D-glucosamine + a (3R)-hydroxyacyl-[ACP] = a UDP-2-N,3-O-bis[(3R)-3-hydroxyacyl]-alpha-D-glucosamine + holo-[ACP] + H(+). It functions in the pathway bacterial outer membrane biogenesis; LPS lipid A biosynthesis. Its function is as follows. Catalyzes the N-acylation of UDP-3-O-acylglucosamine using 3-hydroxyacyl-ACP as the acyl donor. Is involved in the biosynthesis of lipid A, a phosphorylated glycolipid that anchors the lipopolysaccharide to the outer membrane of the cell. The polypeptide is UDP-3-O-acylglucosamine N-acyltransferase (Paraburkholderia phymatum (strain DSM 17167 / CIP 108236 / LMG 21445 / STM815) (Burkholderia phymatum)).